Reading from the N-terminus, the 315-residue chain is DNA-directed RNA polymerase subunit alpha (315 aa).

The tract at residues 1-228 (MIEMEKPKVE…EHLNLFITLK (228 aa)) is alpha N-terminal domain (alpha-NTD). Residues 245–315 (KEKVLEMTIE…LGLGLRPSDE (71 aa)) are alpha C-terminal domain (alpha-CTD).

The protein belongs to the RNA polymerase alpha chain family. In terms of assembly, homodimer. The RNAP catalytic core consists of 2 alpha, 1 beta, 1 beta' and 1 omega subunit. When a sigma factor is associated with the core the holoenzyme is formed, which can initiate transcription.

The catalysed reaction is RNA(n) + a ribonucleoside 5'-triphosphate = RNA(n+1) + diphosphate. Functionally, DNA-dependent RNA polymerase catalyzes the transcription of DNA into RNA using the four ribonucleoside triphosphates as substrates. This Alkaliphilus metalliredigens (strain QYMF) protein is DNA-directed RNA polymerase subunit alpha.